We begin with the raw amino-acid sequence, 56 residues long: MASKGGRDKIKLESTAGTGHFYTTTKNKRTKPEKMEIMKFDPVARKHVAYKETKIK.

The span at Met-1 to Leu-12 shows a compositional bias: basic and acidic residues. The segment at Met-1–Thr-30 is disordered. Positions Thr-15–Thr-25 are enriched in polar residues.

It belongs to the bacterial ribosomal protein bL33 family.

This is Large ribosomal subunit protein bL33 from Ralstonia nicotianae (strain ATCC BAA-1114 / GMI1000) (Ralstonia solanacearum).